Reading from the N-terminus, the 70-residue chain is DNA gyrase inhibitor YacG (70 aa).

Cys9, Cys12, Cys28, and Cys32 together coordinate Zn(2+). Residues 43 to 70 (ESRKIPGSSIDPESIVTTNNKQDNVDEQ) are disordered.

It belongs to the DNA gyrase inhibitor YacG family. Interacts with GyrB. Requires Zn(2+) as cofactor.

Functionally, inhibits all the catalytic activities of DNA gyrase by preventing its interaction with DNA. Acts by binding directly to the C-terminal domain of GyrB, which probably disrupts DNA binding by the gyrase. This chain is DNA gyrase inhibitor YacG, found in Legionella pneumophila (strain Corby).